The following is a 485-amino-acid chain: Adenosylhomocysteinase (485 aa).

Positions 64, 139, and 205 each coordinate substrate. 206 to 208 is an NAD(+) binding site; it reads TTT. 2 residues coordinate substrate: Lys-235 and Asp-239. NAD(+) contacts are provided by residues Asn-240, 269-274, Glu-292, Asn-327, 348-350, and Asn-397; these read GYGDVG and IGH.

This sequence belongs to the adenosylhomocysteinase family. The cofactor is NAD(+).

The enzyme catalyses S-adenosyl-L-homocysteine + H2O = L-homocysteine + adenosine. Its pathway is amino-acid biosynthesis; L-homocysteine biosynthesis; L-homocysteine from S-adenosyl-L-homocysteine: step 1/1. Functionally, adenosylhomocysteine is a competitive inhibitor of S-adenosyl-L-methionine-dependent methyl transferase reactions; therefore adenosylhomocysteinase may play a key role in the control of methylations via regulation of the intracellular concentration of adenosylhomocysteine. The chain is Adenosylhomocysteinase (SAHH) from Phalaenopsis sp. (Moth orchid).